Consider the following 400-residue polypeptide: MMKVKELPKKFGKFGGQFVPETLMNALIELERQFIQTKEDDEFQEMYRYYVREYSGRPTPLYYAENLTKKLGGGKIYLKREDLNHTGAHKINNVIGQVLLARKMKKKRIIAETGAGQHGVATATICAMFDLECVVYMGAEDIERQALNVFKMEMLGAEVVSVTSGTATLKDATNEAIRDWVANVKDTYYVIGSVVGPHPYPTMVRDFQRIIGDEVKEQILEKEGRLPNYLVACVGGGSNAMGLFYPFYEDEAVALYGVEAAGLGVETDQHAATITKGSMGVIHGMMTYLLQDEQGQITPVHSISAGLDYPGIGPEHAYYHHTGRANYVAITDEEALEAFQLLTRLEGIIPALESAHAIAYLMKLAPKTKGDDIIVLNLSGRGDKDIHTISKLLGGNRDDK.

The residue at position 90 (Lys90) is an N6-(pyridoxal phosphate)lysine.

Belongs to the TrpB family. In terms of assembly, tetramer of two alpha and two beta chains. Requires pyridoxal 5'-phosphate as cofactor.

It carries out the reaction (1S,2R)-1-C-(indol-3-yl)glycerol 3-phosphate + L-serine = D-glyceraldehyde 3-phosphate + L-tryptophan + H2O. Its pathway is amino-acid biosynthesis; L-tryptophan biosynthesis; L-tryptophan from chorismate: step 5/5. Functionally, the beta subunit is responsible for the synthesis of L-tryptophan from indole and L-serine. The sequence is that of Tryptophan synthase beta chain from Alkaliphilus metalliredigens (strain QYMF).